A 200-amino-acid polypeptide reads, in one-letter code: Phospholipase A2 inhibitor CNF (200 aa).

The signal sequence occupies residues 1–19 (MKYLHTICLLFIFVARGNS). 8 cysteine pairs are disulfide-bonded: Cys22/Cys46, Cys25/Cys32, Cys39/Cys67, Cys73/Cys94, Cys95/Cys100, Cys118/Cys143, Cys136/Cys165, and Cys169/Cys191. Asn176 carries N-linked (GlcNAc...) asparagine; partial glycosylation.

Occurs as a mixture of oligomers. Tetrameric arrangement appears to be the predominant quaternary structure. Interacts with phospholipase A2 crotoxin basic subunit CBd; the interaction leads to dissociation of the CA-CB heterodimer and to inhibition of PLA2 activity of the CB subunit. In terms of processing, the carbohydrate moiety increases the inhibition capacity of CNF, but is not essential for activity and for oligomerization. As to expression, expressed by the liver.

It is found in the secreted. In terms of biological role, inhibits the PLA2 activity of crotoxin (CTX) by replacing the acid subunit (CA) in the CTX complex. Displays a pro-inflammatory action through activation of important main signaling pathways for human leukocytes, in vitro. Abolishes both the muscle-paralyzing and muscle-damaging activities of CTX in mice phrenic nerve-diaphragm muscle preparations. This is Phospholipase A2 inhibitor CNF from Crotalus durissus terrificus (South American rattlesnake).